A 269-amino-acid polypeptide reads, in one-letter code: Formamidopyrimidine-DNA glycosylase (269 aa).

Catalysis depends on Pro2, which acts as the Schiff-base intermediate with DNA. The Proton donor role is filled by Glu3. Lys57 acts as the Proton donor; for beta-elimination activity in catalysis. DNA-binding residues include His90, Arg109, and Lys150. The segment at 235–269 (QVYGRKGEPCRVCGTPIVATKHAQRATFYCRHCQK) adopts an FPG-type zinc-finger fold. The Proton donor; for delta-elimination activity role is filled by Arg259.

It belongs to the FPG family. Monomer. Requires Zn(2+) as cofactor.

The catalysed reaction is Hydrolysis of DNA containing ring-opened 7-methylguanine residues, releasing 2,6-diamino-4-hydroxy-5-(N-methyl)formamidopyrimidine.. It catalyses the reaction 2'-deoxyribonucleotide-(2'-deoxyribose 5'-phosphate)-2'-deoxyribonucleotide-DNA = a 3'-end 2'-deoxyribonucleotide-(2,3-dehydro-2,3-deoxyribose 5'-phosphate)-DNA + a 5'-end 5'-phospho-2'-deoxyribonucleoside-DNA + H(+). Functionally, involved in base excision repair of DNA damaged by oxidation or by mutagenic agents. Acts as a DNA glycosylase that recognizes and removes damaged bases. Has a preference for oxidized purines, such as 7,8-dihydro-8-oxoguanine (8-oxoG). Has AP (apurinic/apyrimidinic) lyase activity and introduces nicks in the DNA strand. Cleaves the DNA backbone by beta-delta elimination to generate a single-strand break at the site of the removed base with both 3'- and 5'-phosphates. This chain is Formamidopyrimidine-DNA glycosylase, found in Salmonella paratyphi C (strain RKS4594).